A 274-amino-acid polypeptide reads, in one-letter code: Purine nucleoside phosphorylase 1 (274 aa).

Phosphate-binding positions include S29, H60, 80–82, and A112; that span reads RFH. A Phosphoserine modification is found at S29. E192 lines the a purine D-ribonucleoside pocket. Residue S211 coordinates phosphate. N234 is an a purine D-ribonucleoside binding site.

Belongs to the PNP/MTAP phosphorylase family. As to quaternary structure, homotrimer.

It carries out the reaction a purine D-ribonucleoside + phosphate = a purine nucleobase + alpha-D-ribose 1-phosphate. The catalysed reaction is a purine 2'-deoxy-D-ribonucleoside + phosphate = a purine nucleobase + 2-deoxy-alpha-D-ribose 1-phosphate. The protein operates within purine metabolism; purine nucleoside salvage. Functionally, the purine nucleoside phosphorylases catalyze the phosphorolytic breakdown of the N-glycosidic bond in the beta-(deoxy)ribonucleoside molecules, with the formation of the corresponding free purine bases and pentose-1-phosphate. Cleaves guanosine, inosine, 2'-deoxyguanosine and 2'-deoxyinosine. The protein is Purine nucleoside phosphorylase 1 (punA) of Geobacillus stearothermophilus (Bacillus stearothermophilus).